The following is a 181-amino-acid chain: Crossover junction endodeoxyribonuclease RuvC (181 aa).

Active-site residues include Asp-7, Glu-67, and Asp-139. Asp-7, Glu-67, and Asp-139 together coordinate Mg(2+).

It belongs to the RuvC family. In terms of assembly, homodimer which binds Holliday junction (HJ) DNA. The HJ becomes 2-fold symmetrical on binding to RuvC with unstacked arms; it has a different conformation from HJ DNA in complex with RuvA. In the full resolvosome a probable DNA-RuvA(4)-RuvB(12)-RuvC(2) complex forms which resolves the HJ. The cofactor is Mg(2+).

It is found in the cytoplasm. The enzyme catalyses Endonucleolytic cleavage at a junction such as a reciprocal single-stranded crossover between two homologous DNA duplexes (Holliday junction).. In terms of biological role, the RuvA-RuvB-RuvC complex processes Holliday junction (HJ) DNA during genetic recombination and DNA repair. Endonuclease that resolves HJ intermediates. Cleaves cruciform DNA by making single-stranded nicks across the HJ at symmetrical positions within the homologous arms, yielding a 5'-phosphate and a 3'-hydroxyl group; requires a central core of homology in the junction. The consensus cleavage sequence is 5'-(A/T)TT(C/G)-3'. Cleavage occurs on the 3'-side of the TT dinucleotide at the point of strand exchange. HJ branch migration catalyzed by RuvA-RuvB allows RuvC to scan DNA until it finds its consensus sequence, where it cleaves and resolves the cruciform DNA. The protein is Crossover junction endodeoxyribonuclease RuvC of Cupriavidus pinatubonensis (strain JMP 134 / LMG 1197) (Cupriavidus necator (strain JMP 134)).